The primary structure comprises 160 residues: MNPRRKNRLILVMLVLVGLGLATALVMYALRSNIDLFYTPSEMVNGKGEQQLKPEPGQRLRVGGMVMPGSVKRDPNTLRVAFKLYDASGVISVSYDGILPDLFREGQGVVAQGVLQDATHVIAKEVLAKHDEKYTPPEIEDAMKKDHPAQAVGDNSVRPS.

Residues 1-8 lie on the Cytoplasmic side of the membrane; it reads MNPRRKNR. Residues 9 to 29 form a helical; Signal-anchor for type II membrane protein membrane-spanning segment; sequence LILVMLVLVGLGLATALVMYA. Topologically, residues 30–160 are periplasmic; sequence LRSNIDLFYT…AVGDNSVRPS (131 aa). Heme-binding residues include H130 and Y134. Positions 133 to 148 are enriched in basic and acidic residues; sequence KYTPPEIEDAMKKDHP. Positions 133–160 are disordered; sequence KYTPPEIEDAMKKDHPAQAVGDNSVRPS.

Belongs to the CcmE/CycJ family.

It is found in the cell inner membrane. Its function is as follows. Heme chaperone required for the biogenesis of c-type cytochromes. Transiently binds heme delivered by CcmC and transfers the heme to apo-cytochromes in a process facilitated by CcmF and CcmH. The sequence is that of Cytochrome c-type biogenesis protein CcmE from Erwinia tasmaniensis (strain DSM 17950 / CFBP 7177 / CIP 109463 / NCPPB 4357 / Et1/99).